The sequence spans 635 residues: ATP-dependent zinc metalloprotease FtsH (635 aa).

The Cytoplasmic portion of the chain corresponds to 1–6 (MNNQGR). Residues 7–27 (SILTWAALFVFVILLFNVFQS) traverse the membrane as a helical segment. At 28–103 (DGLLGGRNNI…VVPLETRMNT (76 aa)) the chain is on the periplasmic side. The helical transmembrane segment at 104 to 124 (FLGFLISWFPMLLLIGVWVFF) threads the bilayer. The Cytoplasmic portion of the chain corresponds to 125-635 (MRQMHGGGKA…KKAKKESTNI (511 aa)). ATP is bound at residue 195-202 (GPPGTGKT). Position 417 (H417) interacts with Zn(2+). Residue E418 is part of the active site. Positions 421 and 495 each coordinate Zn(2+). The tract at residues 600 to 635 (SEEENKFPFNDSPTIKIDKEKSPEKAKKAKKESTNI) is disordered. Over residues 615 to 635 (KIDKEKSPEKAKKAKKESTNI) the composition is skewed to basic and acidic residues.

The protein in the central section; belongs to the AAA ATPase family. This sequence in the C-terminal section; belongs to the peptidase M41 family. Homohexamer. Requires Zn(2+) as cofactor.

It localises to the cell inner membrane. In terms of biological role, acts as a processive, ATP-dependent zinc metallopeptidase for both cytoplasmic and membrane proteins. Plays a role in the quality control of integral membrane proteins. This Rickettsia felis (strain ATCC VR-1525 / URRWXCal2) (Rickettsia azadi) protein is ATP-dependent zinc metalloprotease FtsH.